The primary structure comprises 121 residues: Protein FAM241B (121 aa).

The disordered stretch occupies residues 12 to 58 (QDDDPRVRTTTQPPRGSIPRQSFFNRGHGAPPGGPGPRQQQAGARLG). A compositionally biased stretch (polar residues) spans 19 to 35 (RTTTQPPRGSIPRQSFF). At Ser33 the chain carries Phosphoserine. The segment covering 48-58 (PRQQQAGARLG) has biased composition (low complexity). Residue Ser62 is modified to Phosphoserine. Residues 92-112 (ILLLFLLMMLGVRGLLLVGLV) form a helical membrane-spanning segment.

This sequence belongs to the FAM241 family.

It is found in the membrane. In terms of biological role, may play a role in lysosome homeostasis. The polypeptide is Protein FAM241B (Homo sapiens (Human)).